The following is a 310-amino-acid chain: DNA repair nuclease APEX1 (310 aa).

The tract at residues 1 to 51 (MPKRAKKNEEGVDGEADNGTAAAKKEKKGKEPEAPILYEDPPEKLTSKDGR) is disordered. The segment covering 41–51 (PPEKLTSKDGR) has biased composition (basic and acidic residues). Residues aspartate 63 and glutamate 89 each contribute to the Mg(2+) site. Tyrosine 164 is an active-site residue. Residues aspartate 203, asparagine 205, and aspartate 300 each contribute to the Mg(2+) site. The active-site Proton donor/acceptor is aspartate 203.

Belongs to the DNA repair enzymes AP/ExoA family. It depends on Mg(2+) as a cofactor. Mn(2+) is required as a cofactor.

The protein resides in the nucleus. It is found in the nucleolus. Its subcellular location is the nucleus speckle. It localises to the endoplasmic reticulum. The protein localises to the cytoplasm. The protein resides in the mitochondrion. The enzyme catalyses Exonucleolytic cleavage in the 3'- to 5'-direction to yield nucleoside 5'-phosphates.. Functionally, functions as an apurinic/apyrimidinic (AP) endodeoxyribonuclease in the DNA base excision repair (BER) pathway of DNA lesions induced by oxidative and alkylating agents. Initiates repair of AP sites in DNA by catalyzing hydrolytic incision of the phosphodiester backbone immediately adjacent to the damage, generating a single-strand break with 5'-deoxyribose phosphate and 3'-hydroxyl ends. Has 3'-5' exoribonuclease activity on mismatched deoxyribonucleotides at the 3' termini of nicked or gapped DNA molecules during short-patch BER. May also play a role in the epigenetic regulation of gene expression by participating in DNA demethylation. Required for passage through the mid-blastula transition MBT. May also act as an endoribonuclease involved in the control of single-stranded RNA metabolism. Has no redox activity. Binds DNA and RNA. The sequence is that of DNA repair nuclease APEX1 (apex1) from Danio rerio (Zebrafish).